The chain runs to 25 residues: Grammistin Pp 3 (25 aa).

It belongs to the grammistin family. Group 3 subfamily. As to quaternary structure, exists as aggregates of 3-4 molecules. In terms of tissue distribution, expressed by the skin glands.

It localises to the secreted. Its function is as follows. Thanks to its abundant amphiphilic alpha-helices, it may integrate into membrane phospholipids, leading to lysis of the membrane. Has hemolytic activity. Has antibacterial activity with a broad spectrum against various species of bacteria including both Gram-positive and Gram-negative groups. Also has ichthyotoxic activity. In Pogonoperca punctata (Clown grouper), this protein is Grammistin Pp 3.